We begin with the raw amino-acid sequence, 160 residues long: 6,7-dimethyl-8-ribityllumazine synthase (160 aa).

Residues Phe23, 61 to 63 (SFE), and 85 to 87 (AVI) each bind 5-amino-6-(D-ribitylamino)uracil. (2S)-2-hydroxy-3-oxobutyl phosphate is bound at residue 90 to 91 (DT). His93 acts as the Proton donor in catalysis. Phe118 is a 5-amino-6-(D-ribitylamino)uracil binding site. Position 132 (Arg132) interacts with (2S)-2-hydroxy-3-oxobutyl phosphate.

Belongs to the DMRL synthase family.

It catalyses the reaction (2S)-2-hydroxy-3-oxobutyl phosphate + 5-amino-6-(D-ribitylamino)uracil = 6,7-dimethyl-8-(1-D-ribityl)lumazine + phosphate + 2 H2O + H(+). It functions in the pathway cofactor biosynthesis; riboflavin biosynthesis; riboflavin from 2-hydroxy-3-oxobutyl phosphate and 5-amino-6-(D-ribitylamino)uracil: step 1/2. Catalyzes the formation of 6,7-dimethyl-8-ribityllumazine by condensation of 5-amino-6-(D-ribitylamino)uracil with 3,4-dihydroxy-2-butanone 4-phosphate. This is the penultimate step in the biosynthesis of riboflavin. This Parasynechococcus marenigrum (strain WH8102) protein is 6,7-dimethyl-8-ribityllumazine synthase.